Here is a 72-residue protein sequence, read N- to C-terminus: Mitotic-spindle organizing protein 1 (72 aa).

This sequence belongs to the MOZART1 family. In terms of assembly, part of the gamma-tubulin complex.

It localises to the cytoplasm. The protein localises to the cytoskeleton. The protein resides in the microtubule organizing center. Its subcellular location is the spindle pole body. Its function is as follows. Required for gamma-tubulin complex recruitment to the microtubule organizing center (MTOC). This Coccidioides immitis (strain RS) (Valley fever fungus) protein is Mitotic-spindle organizing protein 1.